The primary structure comprises 275 residues: Formamidopyrimidine-DNA glycosylase (275 aa).

The active-site Schiff-base intermediate with DNA is Pro2. Glu3 acts as the Proton donor in catalysis. The active-site Proton donor; for beta-elimination activity is Lys59. DNA is bound by residues His93, Arg112, and Arg153. The FPG-type zinc-finger motif lies at 238-272 (NVYDRVGKPCPRCQTAIERIVVAQRSTFFCPLCQV). Residue Arg262 is the Proton donor; for delta-elimination activity of the active site.

Belongs to the FPG family. Monomer. Zn(2+) is required as a cofactor.

The catalysed reaction is Hydrolysis of DNA containing ring-opened 7-methylguanine residues, releasing 2,6-diamino-4-hydroxy-5-(N-methyl)formamidopyrimidine.. It carries out the reaction 2'-deoxyribonucleotide-(2'-deoxyribose 5'-phosphate)-2'-deoxyribonucleotide-DNA = a 3'-end 2'-deoxyribonucleotide-(2,3-dehydro-2,3-deoxyribose 5'-phosphate)-DNA + a 5'-end 5'-phospho-2'-deoxyribonucleoside-DNA + H(+). Its function is as follows. Involved in base excision repair of DNA damaged by oxidation or by mutagenic agents. Acts as a DNA glycosylase that recognizes and removes damaged bases. Has a preference for oxidized purines, such as 7,8-dihydro-8-oxoguanine (8-oxoG). Has AP (apurinic/apyrimidinic) lyase activity and introduces nicks in the DNA strand. Cleaves the DNA backbone by beta-delta elimination to generate a single-strand break at the site of the removed base with both 3'- and 5'-phosphates. This Chloroflexus aggregans (strain MD-66 / DSM 9485) protein is Formamidopyrimidine-DNA glycosylase.